The chain runs to 248 residues: NLP effector protein Pc121494 (248 aa).

The signal sequence occupies residues 1-19; sequence MKFIAVLIAAIASLSAVQA. Positions 124-130 match the Hepta-peptide GHRHDWE motif motif; that stretch reads GHRNGWE. N-linked (GlcNAc...) asparagine glycosylation is present at N143.

This sequence belongs to the Necrosis inducing protein (NPP1) family.

It localises to the secreted. Secreted effector that contributes strongly to virulence during infection by P.capsici. The chain is NLP effector protein Pc121494 from Phytophthora capsici.